The chain runs to 557 residues: Elongator complex protein 3 (557 aa).

The 291-residue stretch at 91 to 381 folds into the Radical SAM core domain; it reads RTASGIAVVA…YRVQRDIPMP (291 aa). Residues Cys-108, Cys-118, and Cys-121 each contribute to the [4Fe-4S] cluster site. Lys-173 is a binding site for acetyl-CoA. Positions 405–557 constitute an N-acetyltransferase domain; sequence TTCRDVRTRE…LDGPYMSKRI (153 aa). Lys-453 is covalently cross-linked (Glycyl lysine isopeptide (Lys-Gly) (interchain with G-Cter in ubiquitin)). Acetyl-CoA contacts are provided by residues 485 to 488, 508 to 510, and Tyr-541; these read ELHV and FGT.

It belongs to the ELP3 family. Component of the elongator complex which consists of ELP1/IKI3, ELP2, ELP3, ELP4, ELP5/IKI1 and ELP6. The elongator complex is composed of two copies of the Elp123 subcomplex (composed of ELP1/IKI3, ELP2 and ELP3) and two copies of the Elp456 subcomplex (composed of ELP4, ELP5/IKI1 and ELP6). The Elp123 subcomplex forms a two-lobed scaffold, which binds the Elp456 subcomplex asymmetrically. In each lobe, ELP2 is tightly sandwiched between ELP1/IKI3 and ELP3. The Elp123 subcomplex binds tRNA through ELP1/IKI3 and ELP3 and can bind 2 tRNAs simultaneously. tRNA-binding induces conformational rearrangements which precisely position the targeted anticodon base in the active site. ELP3 interacts with KTI11/DPH3. ELP3 interacts with KTI12. The Elp456 subcomplex binds tRNA and has ATPase activity. The cofactor is [4Fe-4S] cluster.

The protein resides in the cytoplasm. It is found in the nucleus. The catalysed reaction is uridine(34) in tRNA + acetyl-CoA + S-adenosyl-L-methionine + H2O = 5-(carboxymethyl)uridine(34) in tRNA + 5'-deoxyadenosine + L-methionine + CoA + 2 H(+). It functions in the pathway tRNA modification; 5-methoxycarbonylmethyl-2-thiouridine-tRNA biosynthesis. Functionally, catalytic tRNA acetyltransferase subunit of the elongator complex which is required for multiple tRNA modifications, including mcm5U (5-methoxycarbonylmethyl uridine), mcm5s2U (5-methoxycarbonylmethyl-2-thiouridine), and ncm5U (5-carbamoylmethyl uridine). In the elongator complex, acts as a tRNA uridine(34) acetyltransferase, which mediates formation of carboxymethyluridine in the wobble base at position 34 in tRNAs. The complex functions as a gamma-toxin target (TOT); disruption of the complex confers resistance to Kluyveromyces lactis toxin zymocin (pGKL1 killer toxin). May also be involved in sensitivity to Pichia inositovora toxin. Independently, ELP3 may be involved in polarized exocytosis. The sequence is that of Elongator complex protein 3 from Saccharomyces cerevisiae (strain ATCC 204508 / S288c) (Baker's yeast).